Here is a 930-residue protein sequence, read N- to C-terminus: GPI ethanolamine phosphate transferase 1 (930 aa).

The Cytoplasmic portion of the chain corresponds to 1 to 8 (MARLGRTG). The helical transmembrane segment at 9-29 (FLTLAVVFHLIYAYSIFDIYF) threads the bilayer. At 30 to 466 (VSPIVSGMRP…LQTYDWLFLR (437 aa)) the chain is on the lumenal side. An N-linked (GlcNAc...) asparagine glycan is attached at asparagine 148. The chain crosses the membrane as a helical span at residues 467–487 (TIVTFGYVGWIAYALTTVIHL). Residues 488–498 (HVLHGASESDR) are Cytoplasmic-facing. Residues 499–519 (TTASISFFSSVLVALFSVFLY) traverse the membrane as a helical segment. At 520–521 (QG) the chain is on the lumenal side. The helical transmembrane segment at 522-542 (SPWRYYLYGFFPIFFWEEVFA) threads the bilayer. Over 543–569 (RRKAFHAGRAGALLLPKRDLHSNKVED) the chain is Cytoplasmic. Residues 570 to 590 (IDTITYGGAFMLLTGLLYLLF) form a helical membrane-spanning segment. Residues 591–611 (EDEILGTSHQPAAVSRKGSRN) lie on the Lumenal side of the membrane. Residues 612–632 (IMGLQLGMVLLALIVTRSSAA) form a helical membrane-spanning segment. The Cytoplasmic segment spans residues 633 to 639 (SLQAKQG). Residues 640 to 660 (LPFGNQVVGWGVLIASLLLPF) traverse the membrane as a helical segment. Topologically, residues 661–684 (AHRLYPNSHYLHRLMIIFLTFSPT) are lumenal. Residues 685 to 705 (FIILTISYEGLFYFAFCMTLV) form a helical membrane-spanning segment. The Cytoplasmic segment spans residues 706–761 (TWVRLEHATYVYTAKPVAKQAQETIEPPKKANPGATTVVDGETYRFRTLTVSDARV). The chain crosses the membrane as a helical span at residues 762–782 (ALFFFFLLQSAFFSTGNIASI). Residues 783 to 803 (SSFSLDSVYRLIPVFNPFSQG) are Lumenal-facing. The chain crosses the membrane as a helical span at residues 804 to 824 (ALLILKLLIPFAIISANLGIL). Topologically, residues 825 to 833 (NRRLEVAPS) are cytoplasmic. Residues 834–854 (ALFMVVMAISDVMTLNFFYMV) form a helical membrane-spanning segment. At 855–870 (RDEGSWLDIGTTISHF) the chain is on the lumenal side. A helical transmembrane segment spans residues 871–891 (CIASFLCTFVAGLEFLSEVFI). Topologically, residues 892–930 (SGVDFGLRTDAITASVPDIVNGITSKGQKDVPNGVEDKE) are cytoplasmic.

The protein belongs to the PIGG/PIGN/PIGO family. PIGN subfamily.

The protein localises to the endoplasmic reticulum membrane. It functions in the pathway glycolipid biosynthesis; glycosylphosphatidylinositol-anchor biosynthesis. Functionally, ethanolamine phosphate transferase involved in glycosylphosphatidylinositol-anchor biosynthesis. Transfers ethanolamine phosphate to the first alpha-1,4-linked mannose of the glycosylphosphatidylinositol precursor of GPI-anchor. The sequence is that of GPI ethanolamine phosphate transferase 1 (mcd4) from Emericella nidulans (strain FGSC A4 / ATCC 38163 / CBS 112.46 / NRRL 194 / M139) (Aspergillus nidulans).